Reading from the N-terminus, the 232-residue chain is Aspartate racemase (232 aa).

49 to 51 (DRT) serves as a coordination point for substrate. C84 (proton donor/acceptor) is an active-site residue. Substrate-binding positions include 85–87 (NTA) and K166. Residue C195 is the Proton donor/acceptor of the active site.

This sequence belongs to the aspartate/glutamate racemases family.

The enzyme catalyses L-aspartate = D-aspartate. In Thermococcus sp. (strain KS-8), this protein is Aspartate racemase.